Here is a 991-residue protein sequence, read N- to C-terminus: UvrABC system protein A (991 aa).

ATP is bound at residue 48 to 55 (GLSGSGKS). 2 ABC transporter domains span residues 345–624 (WAKS…PKSL) and 644–972 (NHRR…KFLE). 676 to 683 (GVSGGGKS) serves as a coordination point for ATP. The C4-type zinc-finger motif lies at 775-801 (CEACQGDGVIKIEMHFLPDVYVTCDVC).

It belongs to the ABC transporter superfamily. UvrA family. Forms a heterotetramer with UvrB during the search for lesions.

It is found in the cytoplasm. In terms of biological role, the UvrABC repair system catalyzes the recognition and processing of DNA lesions. UvrA is an ATPase and a DNA-binding protein. A damage recognition complex composed of 2 UvrA and 2 UvrB subunits scans DNA for abnormalities. When the presence of a lesion has been verified by UvrB, the UvrA molecules dissociate. The polypeptide is UvrABC system protein A (Bradyrhizobium diazoefficiens (strain JCM 10833 / BCRC 13528 / IAM 13628 / NBRC 14792 / USDA 110)).